The following is a 48-amino-acid chain: Small, acid-soluble spore protein P (48 aa).

Positions 1–12 (MTNKNDGKDMRK) are enriched in basic and acidic residues. Residues 1–48 (MTNKNDGKDMRKNAPKGAQPGQPEPLSGSKKVKNRNHTRQKHNSSHDM) are disordered. Over residues 30–48 (KKVKNRNHTRQKHNSSHDM) the composition is skewed to basic residues.

It belongs to the SspP family.

It is found in the spore core. This chain is Small, acid-soluble spore protein P, found in Bacillus licheniformis (strain ATCC 14580 / DSM 13 / JCM 2505 / CCUG 7422 / NBRC 12200 / NCIMB 9375 / NCTC 10341 / NRRL NRS-1264 / Gibson 46).